Here is a 364-residue protein sequence, read N- to C-terminus: Large ribosomal subunit protein uL22m (364 aa).

Belongs to the universal ribosomal protein uL22 family. As to quaternary structure, component of the mitochondrial large ribosomal subunit (mt-LSU). Mature N.crassa 74S mitochondrial ribosomes consist of a small (37S) and a large (54S) subunit. The 37S small subunit contains a 16S ribosomal RNA (16S mt-rRNA) and 32 different proteins. The 54S large subunit contains a 23S rRNA (23S mt-rRNA) and 42 different proteins. uL22m forms the wall of the exit tunnel.

It is found in the mitochondrion. In terms of biological role, component of the mitochondrial ribosome (mitoribosome), a dedicated translation machinery responsible for the synthesis of mitochondrial genome-encoded proteins, including at least some of the essential transmembrane subunits of the mitochondrial respiratory chain. The mitoribosomes are attached to the mitochondrial inner membrane and translation products are cotranslationally integrated into the membrane. The polypeptide is Large ribosomal subunit protein uL22m (mrpl22) (Neurospora crassa (strain ATCC 24698 / 74-OR23-1A / CBS 708.71 / DSM 1257 / FGSC 987)).